A 200-amino-acid chain; its full sequence is Cell division protein SepF (200 aa).

Disordered regions lie at residues 35-60 (NLYQ…RWRE) and 170-200 (LHEV…RMAQ). Residues 183-200 (PTGSPNQTWGNETNRMAQ) are compositionally biased toward polar residues.

The protein belongs to the SepF family. Homodimer. Interacts with FtsZ.

The protein resides in the cytoplasm. Its function is as follows. Cell division protein that is part of the divisome complex and is recruited early to the Z-ring. Probably stimulates Z-ring formation, perhaps through the cross-linking of FtsZ protofilaments. Its function overlaps with FtsA. The protein is Cell division protein SepF of Nostoc punctiforme (strain ATCC 29133 / PCC 73102).